A 428-amino-acid polypeptide reads, in one-letter code: E3 ubiquitin-protein ligase RNF128 (428 aa).

The N-terminal stretch at 1-38 (MGPPPGAGVSCRGGCGFSRLLAWCFLLALSPQAPGSRG) is a signal peptide. N-linked (GlcNAc...) asparagine glycans are attached at residues asparagine 48, asparagine 59, and asparagine 101. A PA domain is found at 75-183 (SPLEPVAGVL…LKGTKILQSI (109 aa)). Residues 208-228 (IFFVSVSFFIITAATVGYFIF) traverse the membrane as a helical segment. The RING-type; atypical zinc finger occupies 277-318 (CAVCIELYKPNDLVRILTCNHIFHKTCVDPWLLEHRTCPMCK). The interval 346–428 (ISNSASSHEE…QETAVREIKS (83 aa)) is disordered. The segment covering 360–371 (ETASSGYASVQG) has biased composition (polar residues).

Auto-ubiquitinated. Controls the development of T-cell clonal anergy by ubiquitination.

It localises to the cytoplasm. It is found in the endomembrane system. The protein resides in the cytoskeleton. Its subcellular location is the perinuclear region. The catalysed reaction is S-ubiquitinyl-[E2 ubiquitin-conjugating enzyme]-L-cysteine + [acceptor protein]-L-lysine = [E2 ubiquitin-conjugating enzyme]-L-cysteine + N(6)-ubiquitinyl-[acceptor protein]-L-lysine.. The protein operates within protein modification; protein ubiquitination. E3 ubiquitin-protein ligase that catalyzes 'Lys-27', 'Lys-48'- or 'Lys-63'-linked polyubiquitin chains formation and plays a role in different biological processes such as modulation of immune response, cytoskeletal dynamics or protein homeostasis. Inhibits IL2 and IL4 transcription, thereby playing an important role in the induction of the anergic phenotype, a long-term stable state of T-lymphocyte unresponsiveness to antigenic stimulation associated with the blockade of interleukin production. Ubiquitinates ARPC5 with 'Lys-48' linkages and COR1A with 'Lys-63' linkages leading to their degradation, down-regulation of these cytoskeletal components results in impaired lamellipodium formation and reduced accumulation of F-actin at the immunological synapse. Functions in the patterning of the dorsal ectoderm; sensitizes ectoderm to respond to neural-inducing signals. Plays a positive role in innate immune response by promoting 'Lys-63'-linked ubiquitination of TBK1 after RNA- or DNA-virus infection. Regulates alveolar macrophage activation and neutrophil infiltration by interacting with TLR4, targeting it for degradation, and inhibiting NF-kappa-B activation, hence decreasing pro-inflammatory cytokines. Negatively regulates the IL-3/STAT5 signaling pathway by facilitating 'Lys-27'-linked polyubiquitination of IL3RA leading to its degradation via lysosomal pathway. Directly regulates the N-glycosylation process in the endoplasmic reticulum by targeting the glycosyl-transferase RPN1 for ubiquitination and degradation. Other substrates targeted for degradation by RNF128 include transmembrane proteins CD40L, CD83 or the tetraspanin CD151. This is E3 ubiquitin-protein ligase RNF128 (RNF128) from Homo sapiens (Human).